Reading from the N-terminus, the 137-residue chain is Peptide methionine sulfoxide reductase MsrB (137 aa).

Positions Asp-9–Thr-131 constitute a MsrB domain. Zn(2+) is bound by residues Cys-48, Cys-51, Cys-97, and Cys-100. Cys-120 (nucleophile) is an active-site residue.

The protein belongs to the MsrB Met sulfoxide reductase family. Zn(2+) is required as a cofactor.

The catalysed reaction is L-methionyl-[protein] + [thioredoxin]-disulfide + H2O = L-methionyl-(R)-S-oxide-[protein] + [thioredoxin]-dithiol. The sequence is that of Peptide methionine sulfoxide reductase MsrB from Herminiimonas arsenicoxydans.